Consider the following 432-residue polypeptide: Solute carrier family 38 member 8 (432 aa).

11 helical membrane-spanning segments follow: residues 29–49 (AVFI…PWAF), 59–79 (FLVA…LGYA), 103–123 (LCEI…LRVI), 144–164 (AAQN…LSAL), 175–195 (ILGT…YYLW), 215–237 (VFSV…SIYC), 253–273 (LSLL…FLTF), 292–312 (IIVA…IVLF), 345–365 (LPLT…LPDL), 368–388 (IISI…GLCL), and 409–429 (GILS…VAMV).

This sequence belongs to the amino acid/polyamine transporter 2 family. Expressed in neurons located in the gray matter. Highly expressed in thalamus, hypothalamus, amygdala and pons. Expressed in the CA3 area of hippocampus and in the Purkinje layer of the cerebellum (at protein level). Expressed in the eye.

The protein resides in the membrane. Its subcellular location is the cytoplasm. It is found in the cell cortex. The protein localises to the cell projection. It localises to the axon. It carries out the reaction L-glutamine(out) = L-glutamine(in). The enzyme catalyses L-alanine(in) = L-alanine(out). It catalyses the reaction L-histidine(out) = L-histidine(in). The catalysed reaction is L-aspartate(out) = L-aspartate(in). It carries out the reaction L-arginine(in) = L-arginine(out). The enzyme catalyses L-leucine(in) = L-leucine(out). Functionally, electrogenic sodium-dependent amino acid transporter with a preference for L-glutamine, L-alanine, L-histidine, L-aspartate and L-arginine. May facilitate glutamine uptake in both excitatory and inhibitory neurons. The transport mechanism and stoichiometry remain to be elucidated. In Mus musculus (Mouse), this protein is Solute carrier family 38 member 8.